A 220-amino-acid polypeptide reads, in one-letter code: Sec-independent protein translocase protein TatB (220 aa).

Residues 1–21 (MFDIGFSELLLVLVIGLVVLG) form a helical membrane-spanning segment. The interval 190 to 220 (VTKQQIDTIDSHGTDLSSAGPSRIHQPGGDQ) is disordered.

Belongs to the TatB family. In terms of assembly, the Tat system comprises two distinct complexes: a TatABC complex, containing multiple copies of TatA, TatB and TatC subunits, and a separate TatA complex, containing only TatA subunits. Substrates initially bind to the TatABC complex, which probably triggers association of the separate TatA complex to form the active translocon.

Its subcellular location is the cell inner membrane. In terms of biological role, part of the twin-arginine translocation (Tat) system that transports large folded proteins containing a characteristic twin-arginine motif in their signal peptide across membranes. Together with TatC, TatB is part of a receptor directly interacting with Tat signal peptides. TatB may form an oligomeric binding site that transiently accommodates folded Tat precursor proteins before their translocation. This Yersinia pseudotuberculosis serotype I (strain IP32953) protein is Sec-independent protein translocase protein TatB.